The chain runs to 161 residues: MDKLREKINAARAETDEAVARAEAAEAKLKEVELQLSLKEQEYESLSRKSEAAESQLEELEEETKQLRLKADNEDIQKTEAEQLSRKVELLEEELETNDKLLRETTEKMRQTDVKAEHFERRVQSLERERDDMEQKLEEMTDKYTKVKAELDEVHQALEDL.

A coiled-coil region spans residues 1–161; that stretch reads MDKLREKINA…DEVHQALEDL (161 aa). The segment covering 40-52 has biased composition (basic and acidic residues); that stretch reads EQEYESLSRKSEA. Disordered regions lie at residues 40–65 and 107–134; these read EQEYESLSRKSEAAESQLEELEEETK and EKMRQTDVKAEHFERRVQSLERERDDME.

As to quaternary structure, homodimer.

The protein localises to the cytoplasm. It is found in the cytoskeleton. Forms part of the F-actin contractile ring during cytokinesis. This Schizosaccharomyces pombe (strain 972 / ATCC 24843) (Fission yeast) protein is Tropomyosin (cdc8).